Here is a 405-residue protein sequence, read N- to C-terminus: uncharacterized protein (405 aa).

13 helical membrane-spanning segments follow: residues 19 to 39 (IVSI…PLAV), 48 to 68 (MGFS…ATLL), 85 to 105 (IVVF…LADI), 106 to 126 (ASAW…ILGI), 129 to 149 (SFAG…LHIG), 156 to 176 (GIVT…CYAW), 178 to 198 (GLQG…LLAL), 224 to 244 (GMAL…ITLF), 252 to 272 (GAAF…LLFP), 283 to 303 (VAMI…TAAM), 309 to 329 (IGVL…GVVA), 344 to 364 (TYTV…GLVM), and 366 to 386 (WAGV…ALLL).

Belongs to the major facilitator superfamily. YhhS family.

It localises to the cell inner membrane. This is an uncharacterized protein from Salmonella enteritidis PT4 (strain P125109).